A 123-amino-acid polypeptide reads, in one-letter code: Small ribosomal subunit protein uS12 (123 aa).

Aspartate 89 is subject to 3-methylthioaspartic acid. The interval 101–123 (TLDTSGVSDRRQSRSKYGAKRPK) is disordered. Residues 113-123 (SRSKYGAKRPK) show a composition bias toward basic residues.

This sequence belongs to the universal ribosomal protein uS12 family. Part of the 30S ribosomal subunit. Contacts proteins S8 and S17. May interact with IF1 in the 30S initiation complex.

In terms of biological role, with S4 and S5 plays an important role in translational accuracy. Its function is as follows. Interacts with and stabilizes bases of the 16S rRNA that are involved in tRNA selection in the A site and with the mRNA backbone. Located at the interface of the 30S and 50S subunits, it traverses the body of the 30S subunit contacting proteins on the other side and probably holding the rRNA structure together. The combined cluster of proteins S8, S12 and S17 appears to hold together the shoulder and platform of the 30S subunit. This is Small ribosomal subunit protein uS12 from Solidesulfovibrio magneticus (strain ATCC 700980 / DSM 13731 / RS-1) (Desulfovibrio magneticus).